The chain runs to 156 residues: Small ribosomal subunit protein uS7 (156 aa).

The protein belongs to the universal ribosomal protein uS7 family. In terms of assembly, part of the 30S ribosomal subunit. Contacts proteins S9 and S11.

Functionally, one of the primary rRNA binding proteins, it binds directly to 16S rRNA where it nucleates assembly of the head domain of the 30S subunit. Is located at the subunit interface close to the decoding center, probably blocks exit of the E-site tRNA. The sequence is that of Small ribosomal subunit protein uS7 from Clostridioides difficile (strain 630) (Peptoclostridium difficile).